A 526-amino-acid polypeptide reads, in one-letter code: GMP synthase [glutamine-hydrolyzing] (526 aa).

A Glutamine amidotransferase type-1 domain is found at 4 to 204; that stretch reads KIVVLDFGSQ…AHAICGCSGD (201 aa). Catalysis depends on Cys-87, which acts as the Nucleophile. Active-site residues include His-178 and Glu-180. Positions 205–401 constitute a GMPS ATP-PPase domain; that stretch reads WTPASFVEEQ…LDVPDPIVGR (197 aa). 232 to 238 is a binding site for ATP; sequence SGGVDSS.

In terms of assembly, homodimer.

The catalysed reaction is XMP + L-glutamine + ATP + H2O = GMP + L-glutamate + AMP + diphosphate + 2 H(+). It participates in purine metabolism; GMP biosynthesis; GMP from XMP (L-Gln route): step 1/1. In terms of biological role, catalyzes the synthesis of GMP from XMP. In Salinibacter ruber (strain DSM 13855 / M31), this protein is GMP synthase [glutamine-hydrolyzing].